The following is a 732-amino-acid chain: Ribosomal RNA large subunit methyltransferase K/L (732 aa).

The THUMP domain maps to 50–162 (MAYRICLWSR…RGRLLLGLDL (113 aa)). The disordered stretch occupies residues 396–424 (TERETSSEGDEPQGASGATSRPGPRNDGA).

It belongs to the methyltransferase superfamily. RlmKL family.

It is found in the cytoplasm. It catalyses the reaction guanosine(2445) in 23S rRNA + S-adenosyl-L-methionine = N(2)-methylguanosine(2445) in 23S rRNA + S-adenosyl-L-homocysteine + H(+). The enzyme catalyses guanosine(2069) in 23S rRNA + S-adenosyl-L-methionine = N(2)-methylguanosine(2069) in 23S rRNA + S-adenosyl-L-homocysteine + H(+). Its function is as follows. Specifically methylates the guanine in position 2445 (m2G2445) and the guanine in position 2069 (m7G2069) of 23S rRNA. This chain is Ribosomal RNA large subunit methyltransferase K/L, found in Chromohalobacter salexigens (strain ATCC BAA-138 / DSM 3043 / CIP 106854 / NCIMB 13768 / 1H11).